Here is a 370-residue protein sequence, read N- to C-terminus: Chorismate synthase (370 aa).

The disordered stretch occupies residues 41 to 60 (IQGDLDRRKPGTSRHVTQRK). Residues Arg48 and Arg54 each contribute to the NADP(+) site. FMN contacts are provided by residues 125 to 127 (RSS), 238 to 239 (NA), Gly278, 293 to 297 (KPTSS), and Arg319.

The protein belongs to the chorismate synthase family. In terms of assembly, homotetramer. It depends on FMNH2 as a cofactor.

The enzyme catalyses 5-O-(1-carboxyvinyl)-3-phosphoshikimate = chorismate + phosphate. It functions in the pathway metabolic intermediate biosynthesis; chorismate biosynthesis; chorismate from D-erythrose 4-phosphate and phosphoenolpyruvate: step 7/7. Catalyzes the anti-1,4-elimination of the C-3 phosphate and the C-6 proR hydrogen from 5-enolpyruvylshikimate-3-phosphate (EPSP) to yield chorismate, which is the branch point compound that serves as the starting substrate for the three terminal pathways of aromatic amino acid biosynthesis. This reaction introduces a second double bond into the aromatic ring system. The protein is Chorismate synthase of Cupriavidus pinatubonensis (strain JMP 134 / LMG 1197) (Cupriavidus necator (strain JMP 134)).